Here is a 263-residue protein sequence, read N- to C-terminus: Type-2Ba cytolytic delta-endotoxin (263 aa).

Belongs to the cyt1/cyt2 endotoxin family. Active after proteolytic processing.

Its function is as follows. Kills the larvae of dipteran insects by making pores in the epithelial cell membrane of the insect midgut. The protein is Type-2Ba cytolytic delta-endotoxin (cyt2Ba1) of Bacillus thuringiensis subsp. israelensis.